We begin with the raw amino-acid sequence, 473 residues long: Photosystem II CP43 reaction center protein (473 aa).

A propeptide spanning residues M1 to E14 is cleaved from the precursor. N-acetylthreonine is present on T15. Position 15 is a phosphothreonine (T15). 5 helical membrane passes run L69–A93, L134–N155, K178–T200, K255–S275, and W291–A312. Residue E367 participates in [CaMn4O5] cluster binding. Residues R447 to P471 traverse the membrane as a helical segment.

It belongs to the PsbB/PsbC family. PsbC subfamily. PSII is composed of 1 copy each of membrane proteins PsbA, PsbB, PsbC, PsbD, PsbE, PsbF, PsbH, PsbI, PsbJ, PsbK, PsbL, PsbM, PsbT, PsbX, PsbY, PsbZ, Psb30/Ycf12, at least 3 peripheral proteins of the oxygen-evolving complex and a large number of cofactors. It forms dimeric complexes. Binds multiple chlorophylls and provides some of the ligands for the Ca-4Mn-5O cluster of the oxygen-evolving complex. It may also provide a ligand for a Cl- that is required for oxygen evolution. PSII binds additional chlorophylls, carotenoids and specific lipids. serves as cofactor.

It is found in the plastid membrane. Functionally, one of the components of the core complex of photosystem II (PSII). It binds chlorophyll and helps catalyze the primary light-induced photochemical processes of PSII. PSII is a light-driven water:plastoquinone oxidoreductase, using light energy to abstract electrons from H(2)O, generating O(2) and a proton gradient subsequently used for ATP formation. The sequence is that of Photosystem II CP43 reaction center protein from Cuscuta obtusiflora (Peruvian dodder).